The sequence spans 722 residues: Glycine--tRNA ligase beta subunit (722 aa).

The protein belongs to the class-II aminoacyl-tRNA synthetase family. In terms of assembly, tetramer of two alpha and two beta subunits.

The protein resides in the cytoplasm. The catalysed reaction is tRNA(Gly) + glycine + ATP = glycyl-tRNA(Gly) + AMP + diphosphate. In Xylella fastidiosa (strain M12), this protein is Glycine--tRNA ligase beta subunit.